Consider the following 790-residue polypeptide: Mitochondrial intermediate peptidase (790 aa).

A mitochondrion-targeting transit peptide spans 1–29 (MLKRLARNNSSPWICSRCLQQSQRQRRFN). A Zn(2+)-binding site is contributed by His570. Glu571 is an active-site residue. 2 residues coordinate Zn(2+): His574 and His577.

It belongs to the peptidase M3 family. Requires Zn(2+) as cofactor.

Its subcellular location is the mitochondrion matrix. It catalyses the reaction Release of an N-terminal octapeptide as second stage of processing of some proteins imported into the mitochondrion.. Cleaves proteins, imported into the mitochondrion, to their mature size. While most mitochondrial precursor proteins are processed to the mature form in one step by mitochondrial processing peptidase (MPP), the sequential cleavage by MIP of an octapeptide after initial processing by MPP is a required step for a subgroup of nuclear-encoded precursor proteins destined for the matrix or the inner membrane. The sequence is that of Mitochondrial intermediate peptidase (OCT1) from Phaeosphaeria nodorum (strain SN15 / ATCC MYA-4574 / FGSC 10173) (Glume blotch fungus).